A 261-amino-acid polypeptide reads, in one-letter code: ATP synthase subunit a (261 aa).

Transmembrane regions (helical) follow at residues 28 to 48 (AVHL…LTIF), 89 to 109 (IAPL…MDWV), 140 to 160 (NITF…SIKV), 203 to 223 (LFGN…IGVF), and 229 to 249 (FLWA…FMML).

It belongs to the ATPase A chain family. F-type ATPases have 2 components, CF(1) - the catalytic core - and CF(0) - the membrane proton channel. CF(1) has five subunits: alpha(3), beta(3), gamma(1), delta(1), epsilon(1). CF(0) has three main subunits: a(1), b(2) and c(9-12). The alpha and beta chains form an alternating ring which encloses part of the gamma chain. CF(1) is attached to CF(0) by a central stalk formed by the gamma and epsilon chains, while a peripheral stalk is formed by the delta and b chains.

It localises to the cell inner membrane. Its function is as follows. Key component of the proton channel; it plays a direct role in the translocation of protons across the membrane. The protein is ATP synthase subunit a of Colwellia psychrerythraea (strain 34H / ATCC BAA-681) (Vibrio psychroerythus).